Reading from the N-terminus, the 129-residue chain is Large ribosomal subunit protein bL12c (129 aa).

The protein belongs to the bacterial ribosomal protein bL12 family. Homodimer. Part of the ribosomal stalk of the 50S ribosomal subunit. Forms a multimeric L10(L12)X complex, where L10 forms an elongated spine to which 2 to 4 L12 dimers bind in a sequential fashion. Binds GTP-bound translation factors.

The protein resides in the plastid. Its subcellular location is the chloroplast. In terms of biological role, forms part of the ribosomal stalk which helps the ribosome interact with GTP-bound translation factors. Is thus essential for accurate translation. In Tupiella akineta (Green alga), this protein is Large ribosomal subunit protein bL12c.